The chain runs to 443 residues: Signal recognition particle 54 kDa protein (443 aa).

GTP contacts are provided by residues 107–114, 189–193, and 247–250; these read GIQGSGKT, DTAGR, and TKLD.

The protein belongs to the GTP-binding SRP family. SRP54 subfamily. As to quaternary structure, part of the signal recognition particle protein translocation system, which is composed of SRP and FtsY. Archaeal SRP consists of a 7S RNA molecule of 300 nucleotides and two protein subunits: SRP54 and SRP19.

The protein localises to the cytoplasm. It carries out the reaction GTP + H2O = GDP + phosphate + H(+). Involved in targeting and insertion of nascent membrane proteins into the cytoplasmic membrane. Binds to the hydrophobic signal sequence of the ribosome-nascent chain (RNC) as it emerges from the ribosomes. The SRP-RNC complex is then targeted to the cytoplasmic membrane where it interacts with the SRP receptor FtsY. This chain is Signal recognition particle 54 kDa protein, found in Pyrococcus furiosus (strain ATCC 43587 / DSM 3638 / JCM 8422 / Vc1).